We begin with the raw amino-acid sequence, 1167 residues long: Carbamoyl phosphate synthase large chain (1167 aa).

Positions 1-455 are carboxyphosphate synthetic domain; the sequence is MPRRTDIKSI…SLQKALRGLE (455 aa). Residues Arg-129, Arg-221, Gly-227, Gly-228, Glu-260, Val-262, Glu-267, Gly-293, Val-294, His-295, Gln-337, and Glu-351 each coordinate ATP. The ATP-grasp 1 domain occupies 184–380; sequence LETRWNLGEG…IAKIAAKLAV (197 aa). Residues Gln-337, Glu-351, and Asn-353 each coordinate Mg(2+). Positions 337, 351, and 353 each coordinate Mn(2+). The oligomerization domain stretch occupies residues 456–619; the sequence is TGLTGLDEIE…PFAGALANEA (164 aa). The interval 620 to 1031 is carbamoyl phosphate synthetic domain; sequence QVSSRKKVVI…AFAKSQLGAG (412 aa). An ATP-grasp 2 domain is found at 748–960; sequence QKLLHKLGLS…IAKIAARIMA (213 aa). ATP contacts are provided by Arg-784, Thr-844, Leu-846, Glu-851, Gly-876, Ile-877, His-878, Ser-879, Gln-919, and Glu-931. Positions 919, 931, and 933 each coordinate Mg(2+). Gln-919, Glu-931, and Asn-933 together coordinate Mn(2+). Residues 1032–1167 form the MGS-like domain; the sequence is VDLPRSGTLF…EVRPLQEYFA (136 aa). Residues 1032–1167 are allosteric domain; the sequence is VDLPRSGTLF…EVRPLQEYFA (136 aa).

This sequence belongs to the CarB family. In terms of assembly, composed of two chains; the small (or glutamine) chain promotes the hydrolysis of glutamine to ammonia, which is used by the large (or ammonia) chain to synthesize carbamoyl phosphate. Tetramer of heterodimers (alpha,beta)4. Mg(2+) serves as cofactor. Mn(2+) is required as a cofactor.

The catalysed reaction is hydrogencarbonate + L-glutamine + 2 ATP + H2O = carbamoyl phosphate + L-glutamate + 2 ADP + phosphate + 2 H(+). It carries out the reaction hydrogencarbonate + NH4(+) + 2 ATP = carbamoyl phosphate + 2 ADP + phosphate + 2 H(+). It participates in amino-acid biosynthesis; L-arginine biosynthesis; carbamoyl phosphate from bicarbonate: step 1/1. The protein operates within pyrimidine metabolism; UMP biosynthesis via de novo pathway; (S)-dihydroorotate from bicarbonate: step 1/3. Large subunit of the glutamine-dependent carbamoyl phosphate synthetase (CPSase). CPSase catalyzes the formation of carbamoyl phosphate from the ammonia moiety of glutamine, carbonate, and phosphate donated by ATP, constituting the first step of 2 biosynthetic pathways, one leading to arginine and/or urea and the other to pyrimidine nucleotides. The large subunit (synthetase) binds the substrates ammonia (free or transferred from glutamine from the small subunit), hydrogencarbonate and ATP and carries out an ATP-coupled ligase reaction, activating hydrogencarbonate by forming carboxy phosphate which reacts with ammonia to form carbamoyl phosphate. In Mesorhizobium japonicum (strain LMG 29417 / CECT 9101 / MAFF 303099) (Mesorhizobium loti (strain MAFF 303099)), this protein is Carbamoyl phosphate synthase large chain.